Reading from the N-terminus, the 518-residue chain is Dihydropyrimidinase 2 (518 aa).

Positions 59, 61, and 152 each coordinate Zn(2+). Lys152 is modified (N6-carboxylysine). Tyr157 contacts substrate. Zn(2+) contacts are provided by His185 and His241. Ser291 lines the substrate pocket. Residue Asp319 coordinates Zn(2+). Asn340 contacts substrate.

The protein belongs to the metallo-dependent hydrolases superfamily. Hydantoinase/dihydropyrimidinase family. Homotetramer. It depends on Zn(2+) as a cofactor. In terms of processing, carboxylation allows a single lysine to coordinate two zinc ions.

It carries out the reaction 5,6-dihydrouracil + H2O = 3-(carbamoylamino)propanoate + H(+). This chain is Dihydropyrimidinase 2 (dhp-2), found in Caenorhabditis briggsae.